The primary structure comprises 31 residues: Potassium channel toxin alpha-KTx 5.5 (31 aa).

Cystine bridges form between C3-C21, C8-C26, and C12-C28. Residues R6–E9 form a [R/K]XCQ motif region. Residue H31 is modified to Histidine amide.

As to expression, expressed by the venom gland.

It localises to the secreted. Blocks small conductance calcium-activated potassium channels. The protein is Potassium channel toxin alpha-KTx 5.5 of Hottentotta tamulus (Eastern Indian scorpion).